Here is a 138-residue protein sequence, read N- to C-terminus: Large ribosomal subunit protein uL16c (138 aa).

The protein belongs to the universal ribosomal protein uL16 family. In terms of assembly, part of the 50S ribosomal subunit.

The protein localises to the plastid. It localises to the chloroplast. The chain is Large ribosomal subunit protein uL16c from Phaeodactylum tricornutum (strain CCAP 1055/1).